Consider the following 672-residue polypeptide: Acetoacetyl-CoA synthetase (672 aa).

The protein belongs to the ATP-dependent AMP-binding enzyme family.

The protein resides in the cytoplasm. The protein localises to the cytosol. The enzyme catalyses acetoacetate + ATP + CoA = acetoacetyl-CoA + AMP + diphosphate. Its function is as follows. Activates acetoacetate to acetoacetyl-CoA. The polypeptide is Acetoacetyl-CoA synthetase (aacs) (Xenopus tropicalis (Western clawed frog)).